The primary structure comprises 93 residues: Translation initiation factor IF-1 (93 aa).

Residues Met-1–Lys-72 enclose the S1-like domain. The interval Phe-69 to Arg-93 is disordered.

This sequence belongs to the IF-1 family. Component of the 30S ribosomal translation pre-initiation complex which assembles on the 30S ribosome in the order IF-2 and IF-3, IF-1 and N-formylmethionyl-tRNA(fMet); mRNA recruitment can occur at any time during PIC assembly.

Its subcellular location is the cytoplasm. Functionally, one of the essential components for the initiation of protein synthesis. Stabilizes the binding of IF-2 and IF-3 on the 30S subunit to which N-formylmethionyl-tRNA(fMet) subsequently binds. Helps modulate mRNA selection, yielding the 30S pre-initiation complex (PIC). Upon addition of the 50S ribosomal subunit IF-1, IF-2 and IF-3 are released leaving the mature 70S translation initiation complex. The sequence is that of Translation initiation factor IF-1 from Nitrobacter hamburgensis (strain DSM 10229 / NCIMB 13809 / X14).